We begin with the raw amino-acid sequence, 264 residues long: tRNA (guanine-N(1)-)-methyltransferase (264 aa).

S-adenosyl-L-methionine is bound by residues G133 and L152–M157. Residues Q240–G251 are compositionally biased toward basic and acidic residues. A disordered region spans residues Q240–R264. Residues P255 to R264 show a composition bias toward acidic residues.

Belongs to the RNA methyltransferase TrmD family. In terms of assembly, homodimer.

It localises to the cytoplasm. The enzyme catalyses guanosine(37) in tRNA + S-adenosyl-L-methionine = N(1)-methylguanosine(37) in tRNA + S-adenosyl-L-homocysteine + H(+). Its function is as follows. Specifically methylates guanosine-37 in various tRNAs. This chain is tRNA (guanine-N(1)-)-methyltransferase, found in Sorangium cellulosum (strain So ce56) (Polyangium cellulosum (strain So ce56)).